Consider the following 721-residue polypeptide: Vacuolar transporter chaperone complex subunit 4 (721 aa).

The SPX domain occupies 1–148 (MKFGEHLSKS…GFILKPVFQV (148 aa)). The Cytoplasmic portion of the chain corresponds to 1 to 630 (MKFGEHLSKS…PKVYFATERT (630 aa)). Lys-75 is covalently cross-linked (Glycyl lysine isopeptide (Lys-Gly) (interchain with G-Cter in ubiquitin)). Residues 126–133 (GFQKIIKK) are important for inositol polyphosphate binding. Residues Lys-200, Arg-264, Arg-266, Lys-281, Lys-294, Tyr-359, and Arg-361 each contribute to the ATP site. Mn(2+) is bound at residue Glu-426. Lys-458 is a catalytic residue. The interval 489–512 (PLPTNIEITRPGRSDNEDNDFDED) is disordered. 2 helical membrane passes run 631-651 (YLSWLSISILLGGVSTTLLTY) and 652-672 (GSPTAMIGSIGFFITSLAVLI). The Cytoplasmic segment spans residues 673–699 (RTVMVYAKRVVNIRLKRAVDYEDKIGP). Residues 700–720 (GMVSVFLILSILFSFFCNLVA) traverse the membrane as a helical segment. Lys-721 is a topological domain (vacuolar).

Belongs to the VTC4 family. In terms of assembly, the VTC core complex is an integral membrane heterooligomer composed of the catalytic subunit VTC4 and the accessory subunits VTC1, VTC2 and VTC3. The complex exists in 2 different sub-complexes: VTC1-VTC2-VCT4 and VCT1-VTC3-VTC4. The VCT1-VTC3-VTC4 subcomplex is mostly found on the vacuolar membrane. The VTC1-VTC2-VCT4 subcomplex is observed in the cell periphery, probably ER and nuclear envelope, but localizes to the vacuole under phosphate starvation. Each subunit contains 3 transmembrane helices. VTC1 is a small membrane protein without hydrophilic domain. VTC2, VTC3 and VTC4 are related and have 2 hydrophilic domains that face the cytosol, an N-terminal SPX domain and the central core domain. The central core in VTC4 is the catalytic domain, with the essential catalytic lysine replaced by isoleucine and leucine in VTC2 and VTC3, respectively. The core complex associates with the accessory subunit VTC5. The complex interacts with the v-SNARE NYV1 and with the V(0) subunit of V-ATPase VPH1. Requires Mn(2+) as cofactor.

The protein resides in the vacuole membrane. It is found in the cytoplasm. It localises to the cell cortex. The protein localises to the endoplasmic reticulum membrane. Its subcellular location is the cytoplasmic vesicle. The protein resides in the autophagosome membrane. It catalyses the reaction [phosphate](n) + ATP = [phosphate](n+1) + ADP. With respect to regulation, activity of the enzyme is Mn(2+)-dependent and enhanced in the presence of pyrophosphate (PPi). Catalytic subunit of the vacuolar transporter chaperone (VTC) complex. The VTC complex acts as a vacuolar polyphosphate polymerase that catalyzes the synthesis of inorganic polyphosphate (polyP) via transfer of phosphate from ATP to a growing polyP chain, releasing ADP. VTC exposes its catalytic domain VTC4 to the cytosol, where the growing polyP chain winds through a tunnel-shaped pocket, integrating cytoplasmic polymer synthesis with polyP membrane translocation. The VTC complex carries 9 vacuolar transmembrane domains, which are likely to constitute the translocation channel into the organelle lumen. PolyP synthesis is tightly coupled to its transport into the vacuole lumen, in order to avoid otherwise toxic intermediates in the cytosol, and it depends on the proton gradient across the membrane, formed by V-ATPase. The VTC complex also plays a role in vacuolar membrane fusion. Required for SEC18/NSF activity in SNARE priming, membrane binding of LMA1 and V(0) trans-complex formation. Binds inositol hexakisphosphate (Ins6P) and similar inositol polyphosphates, such as 5-diphospho-inositol pentakisphosphate (5-InsP7); these are important intracellular signaling molecules. Inositol polyphosphate binding promotes vacuolar polyphosphate synthesis. The VTC complex is required for microautophagy. It is a constituent of autophagic tubes and is required for scission of microautophagic vesicles from these tubes. This chain is Vacuolar transporter chaperone complex subunit 4, found in Saccharomyces cerevisiae (strain ATCC 204508 / S288c) (Baker's yeast).